We begin with the raw amino-acid sequence, 260 residues long: MLVLLPPSEGKAASGRGAPLKTGSLSLPGLTAAREAVLGELVELCAGDEEKAREVLGLSEGLRGEVAKNTELLTAGARPAGEIYTGVLYDALDLASLDAAAKRRAARSLLVFSGLWGAVRMTDRIPSYRCSMGVKLPGLGALGAHWRAPMAEVLPEAAGDGLVLDLRSAAYAAAWKPKGEVAARTATVRVLHAPTRKVVSHFNKATKGRIVRSLLATGTAPEGPAELVEALRDLGYEVEAEAPAKGGRPWSLDVLVHEVH.

The protein belongs to the UPF0246 family.

The sequence is that of UPF0246 protein SCO2297 from Streptomyces coelicolor (strain ATCC BAA-471 / A3(2) / M145).